A 67-amino-acid polypeptide reads, in one-letter code: Photosystem II reaction center protein H (67 aa).

A helical membrane pass occupies residues 27-47 (GAVPVMAFVGVLLLVFLVILL).

This sequence belongs to the PsbH family. PSII is composed of 1 copy each of membrane proteins PsbA, PsbB, PsbC, PsbD, PsbE, PsbF, PsbH, PsbI, PsbJ, PsbK, PsbL, PsbM, PsbT, PsbX, PsbY, Psb30/Ycf12, peripheral proteins PsbO, CyanoQ (PsbQ), PsbU, PsbV and a large number of cofactors. It forms dimeric complexes.

The protein resides in the cellular thylakoid membrane. Functionally, one of the components of the core complex of photosystem II (PSII), required for its stability and/or assembly. PSII is a light-driven water:plastoquinone oxidoreductase that uses light energy to abstract electrons from H(2)O, generating O(2) and a proton gradient subsequently used for ATP formation. It consists of a core antenna complex that captures photons, and an electron transfer chain that converts photonic excitation into a charge separation. This is Photosystem II reaction center protein H from Prochlorococcus marinus (strain SARG / CCMP1375 / SS120).